The primary structure comprises 33 residues: Cecropin-B (33 aa).

Lys21 is subject to 5-hydroxylysine.

In terms of assembly, monomer. In terms of tissue distribution, hemolymph.

The protein localises to the secreted. Its function is as follows. Cecropins have lytic and antibacterial activity against several Gram-positive and Gram-negative bacteria. Also has activity against fungi. The chain is Cecropin-B from Heliothis virescens (Tobacco budworm moth).